A 435-amino-acid chain; its full sequence is uncharacterized protein (435 aa).

A run of 11 helical transmembrane segments spans residues 9–29 (IIVL…ITFA), 57–77 (VGLD…GNIM), 110–130 (TLFG…GGIM), 146–166 (AINV…VLIV), 176–196 (VAAL…ALMT), 226–246 (LPSL…VFTP), 280–300 (VVTS…SWAM), 321–341 (WVIL…MDIT), 343–363 (AILI…IDPV), 367–387 (IIMV…TILF), and 408–428 (FLAL…SLLL).

Belongs to the YiaN/YgiK family.

It localises to the cell inner membrane. This is an uncharacterized protein from Salmonella typhimurium (strain LT2 / SGSC1412 / ATCC 700720).